We begin with the raw amino-acid sequence, 497 residues long: Signal recognition particle subunit SRP54 2 (497 aa).

Residues Met1–Leu295 are G-domain. GTP contacts are provided by residues Gly108–Thr115, Asp190–Arg194, and Thr248–Asp251. Positions Gly296 to Asp497 are M-domain.

The protein belongs to the GTP-binding SRP family. SRP54 subfamily. As to quaternary structure, component of a signal recognition particle (SRP) complex that consists of a 7SL RNA molecule of 300 nucleotides and six protein subunits: SRP72, SRP68, SRP54, SRP19, SRP14 and SRP9.

The protein resides in the cytoplasm. It localises to the endoplasmic reticulum. The enzyme catalyses GTP + H2O = GDP + phosphate + H(+). In terms of biological role, component of the signal recognition particle (SRP) complex, a ribonucleoprotein complex that mediates the cotranslational targeting of secretory and membrane proteins to the endoplasmic reticulum (ER). As part of the SRP complex, associates with the SRP receptor (SR) component SRPRA to target secretory proteins to the endoplasmic reticulum membrane. Binds to the signal sequence of presecretory proteins when they emerge from the ribosomes. Displays basal GTPase activity, and stimulates reciprocal GTPase activation of the SR subunit SRPRA. Forms a guanosine 5'-triphosphate (GTP)-dependent complex with the SR subunit SRPRA. SR compaction and GTPase mediated rearrangement of SR drive SRP-mediated cotranslational protein translocation into the ER. Requires the presence of SRP9/SRP14 and/or SRP19 to stably interact with RNA. The polypeptide is Signal recognition particle subunit SRP54 2 (SRP54-2) (Hordeum vulgare (Barley)).